The following is a 778-amino-acid chain: Lon protease (778 aa).

In terms of domain architecture, Lon N-terminal spans 6 to 207; sequence LPLMALRDMV…TVISTLTSNI (202 aa). 356 to 363 serves as a coordination point for ATP; it reads GPPGVGKT. The Lon proteolytic domain maps to 592–773; it reads EDQIGSTTGL…DQVLKHALVE (182 aa). Catalysis depends on residues S679 and K722.

Belongs to the peptidase S16 family. As to quaternary structure, homohexamer. Organized in a ring with a central cavity.

Its subcellular location is the cytoplasm. The catalysed reaction is Hydrolysis of proteins in presence of ATP.. Its function is as follows. ATP-dependent serine protease that mediates the selective degradation of mutant and abnormal proteins as well as certain short-lived regulatory proteins. Required for cellular homeostasis and for survival from DNA damage and developmental changes induced by stress. Degrades polypeptides processively to yield small peptide fragments that are 5 to 10 amino acids long. Binds to DNA in a double-stranded, site-specific manner. The polypeptide is Lon protease (Rickettsia felis (strain ATCC VR-1525 / URRWXCal2) (Rickettsia azadi)).